Consider the following 137-residue polypeptide: Glutaredoxin-C9 (137 aa).

One can recognise a Glutaredoxin domain in the interval 32-136; sequence GERVRMVVEE…PILKEVGALW (105 aa). Cys-52 and Cys-55 are oxidised to a cystine. The Responsive for interaction with TGA factors signature appears at 134–137; sequence ALWL.

The protein belongs to the glutaredoxin family. CC-type subfamily. As to quaternary structure, interacts with TGA2 and TGA6.

Its subcellular location is the cytoplasm. It localises to the nucleus. Has a glutathione-disulfide oxidoreductase activity in the presence of NADPH and glutathione reductase. Reduces low molecular weight disulfides and proteins. The chain is Glutaredoxin-C9 (GRXC9) from Arabidopsis thaliana (Mouse-ear cress).